We begin with the raw amino-acid sequence, 101 residues long: Small ribosomal subunit protein uS14 (101 aa).

Belongs to the universal ribosomal protein uS14 family. As to quaternary structure, part of the 30S ribosomal subunit. Contacts proteins S3 and S10.

Binds 16S rRNA, required for the assembly of 30S particles and may also be responsible for determining the conformation of the 16S rRNA at the A site. The protein is Small ribosomal subunit protein uS14 of Chlamydia muridarum (strain MoPn / Nigg).